Here is a 227-residue protein sequence, read N- to C-terminus: 7-cyano-7-deazaguanine synthase (227 aa).

11–21 is an ATP binding site; it reads VSGGMDSAALL. Zn(2+) is bound by residues Cys-192, Cys-200, Cys-203, and Cys-206.

Belongs to the QueC family. The cofactor is Zn(2+).

It catalyses the reaction 7-carboxy-7-deazaguanine + NH4(+) + ATP = 7-cyano-7-deazaguanine + ADP + phosphate + H2O + H(+). The protein operates within purine metabolism; 7-cyano-7-deazaguanine biosynthesis. Its function is as follows. Catalyzes the ATP-dependent conversion of 7-carboxy-7-deazaguanine (CDG) to 7-cyano-7-deazaguanine (preQ(0)). In Persephonella marina (strain DSM 14350 / EX-H1), this protein is 7-cyano-7-deazaguanine synthase.